A 536-amino-acid chain; its full sequence is CTP synthase (536 aa).

An amidoligase domain region spans residues methionine 1 to leucine 267. Serine 13 is a CTP binding site. Serine 13 is a UTP binding site. Serine 14–isoleucine 19 lines the ATP pocket. Tyrosine 54 contacts L-glutamine. ATP is bound at residue aspartate 71. Residues aspartate 71 and glutamate 141 each coordinate Mg(2+). Residues aspartate 148–glutamate 150, lysine 188–glutamine 193, and lysine 224 contribute to the CTP site. UTP is bound by residues lysine 188–glutamine 193 and lysine 224. Arginine 240–alanine 242 lines the ATP pocket. Residues threonine 293–serine 535 enclose the Glutamine amidotransferase type-1 domain. L-glutamine is bound at residue glycine 355. Cysteine 382 serves as the catalytic Nucleophile; for glutamine hydrolysis. Residues leucine 383–glutamine 386, glutamate 406, and arginine 463 contribute to the L-glutamine site. Catalysis depends on residues histidine 508 and glutamate 510.

The protein belongs to the CTP synthase family. Homotetramer.

It carries out the reaction UTP + L-glutamine + ATP + H2O = CTP + L-glutamate + ADP + phosphate + 2 H(+). It catalyses the reaction L-glutamine + H2O = L-glutamate + NH4(+). The enzyme catalyses UTP + NH4(+) + ATP = CTP + ADP + phosphate + 2 H(+). It functions in the pathway pyrimidine metabolism; CTP biosynthesis via de novo pathway; CTP from UDP: step 2/2. Allosterically activated by GTP, when glutamine is the substrate; GTP has no effect on the reaction when ammonia is the substrate. The allosteric effector GTP functions by stabilizing the protein conformation that binds the tetrahedral intermediate(s) formed during glutamine hydrolysis. Inhibited by the product CTP, via allosteric rather than competitive inhibition. In terms of biological role, catalyzes the ATP-dependent amination of UTP to CTP with either L-glutamine or ammonia as the source of nitrogen. Regulates intracellular CTP levels through interactions with the four ribonucleotide triphosphates. In Staphylococcus saprophyticus subsp. saprophyticus (strain ATCC 15305 / DSM 20229 / NCIMB 8711 / NCTC 7292 / S-41), this protein is CTP synthase.